The following is a 50-amino-acid chain: Apoptotic protease-activating factor 1 (50 aa).

In terms of domain architecture, CARD spans 1–31 (ILKKDNYSYISFYNALIHEGYKDLAALLHSG). The 5-residue stretch at 46–50 (GGITS) folds into the NB-ARC domain.

Monomer. Oligomerizes to a heptameric ring, known as the apoptosome, upon binding of cytochrome c and dATP. Oligomeric Apaf-1 and pro-caspase-9 bind to each other via their respective NH2-terminal CARD domains and consecutively mature caspase-9 is released from the complex. Interacts with APIP. Interacts (via CARD and NACHT domains) with NAIP/BIRC1 (via NACHT domain). Interacts with CIAO2A.

Its function is as follows. Oligomeric Apaf-1 mediates the cytochrome c-dependent autocatalytic activation of pro-caspase 9 (Apaf-3), leading to the activation of caspase-3 and apoptosis. This activation requires ATP. The protein is Apoptotic protease-activating factor 1 (APAF1) of Canis lupus familiaris (Dog).